The following is a 354-amino-acid chain: Uroporphyrinogen decarboxylase (354 aa).

Residues 27-31 (RQAGR), D77, Y154, T209, and H327 contribute to the substrate site.

This sequence belongs to the uroporphyrinogen decarboxylase family. As to quaternary structure, homodimer.

Its subcellular location is the cytoplasm. It catalyses the reaction uroporphyrinogen III + 4 H(+) = coproporphyrinogen III + 4 CO2. The protein operates within porphyrin-containing compound metabolism; protoporphyrin-IX biosynthesis; coproporphyrinogen-III from 5-aminolevulinate: step 4/4. Functionally, catalyzes the decarboxylation of four acetate groups of uroporphyrinogen-III to yield coproporphyrinogen-III. The sequence is that of Uroporphyrinogen decarboxylase from Psychromonas ingrahamii (strain DSM 17664 / CCUG 51855 / 37).